We begin with the raw amino-acid sequence, 211 residues long: Putative ATP-dependent Clp protease proteolytic subunit-like (211 aa).

A disordered region spans residues 1–24 (MTRPSARHVLPEFTERTSAGTRTS). The active site involves His129.

It belongs to the peptidase S14 family.

Its function is as follows. Has lost one of the conserved residue (Ser) proposed to be part of the active site. Therefore it could be inactive. This is Putative ATP-dependent Clp protease proteolytic subunit-like from Streptomyces coelicolor (strain ATCC BAA-471 / A3(2) / M145).